The sequence spans 1624 residues: Putative serine/threonine-protein kinase/receptor R831 (1624 aa).

A signal peptide spans 1–25; it reads MHSVYTKYTIILILLVIYQGLPTNT. Residues asparagine 152, asparagine 169, asparagine 200, asparagine 205, asparagine 225, asparagine 240, asparagine 245, asparagine 292, asparagine 364, asparagine 479, asparagine 541, asparagine 720, and asparagine 737 are each glycosylated (N-linked (GlcNAc...) asparagine; by host). The chain crosses the membrane as a helical span at residues 747–767; it reads VIPIACIFGLLLLTLLIVIIF. In terms of domain architecture, Protein kinase 1 spans 786-1049; that stretch reads LEIGETLGTG…EIMTRLSNIL (264 aa). ATP is bound by residues 792–800 and lysine 813; that span reads LGTGGYGEV. The Proton acceptor role is filled by aspartate 908. Residues 1054 to 1093 show a composition bias toward low complexity; that stretch reads NMTSGTSSSSLSSGGIGKSITDSKSSNSRSSVESSNTSNT. Positions 1054-1101 are disordered; sequence NMTSGTSSSSLSSGGIGKSITDSKSSNSRSSVESSNTSNTFRGIDRHN. The 144-residue stretch at 1109–1252 folds into the Guanylate cyclase domain; that stretch reads TVAFIDIISA…STVNITGKIT (144 aa). Residues 1364-1615 enclose the Protein kinase 2 domain; the sequence is ISIGKQIGLG…MTEVVQQLML (252 aa). ATP contacts are provided by residues 1370–1378 and lysine 1391; that span reads IGLGSYGIV. The active-site Proton acceptor is aspartate 1487.

It localises to the membrane. The enzyme catalyses L-seryl-[protein] + ATP = O-phospho-L-seryl-[protein] + ADP + H(+). It carries out the reaction L-threonyl-[protein] + ATP = O-phospho-L-threonyl-[protein] + ADP + H(+). This is Putative serine/threonine-protein kinase/receptor R831 from Acanthamoeba polyphaga (Amoeba).